The sequence spans 2547 residues: Piezo-type mechanosensitive ion channel component 1 (2547 aa).

At 1-12 (MEPHVLGAGLYW) the chain is on the cytoplasmic side. Residues 13 to 25 (LLLPCTLLAASLL) form a helical membrane-spanning segment. At 26 to 28 (RFN) the chain is on the extracellular side. The helical transmembrane segment at 29–44 (ALSLVYLLFLLLLPWL) threads the bilayer. At 45 to 58 (PGPSRHSIPGHTGR) the chain is on the cytoplasmic side. A helical transmembrane segment spans residues 59–81 (LLRALLCLSLLFLVAHLAFQICL). At 82-121 (HTVPHLDQFLGQNGSLWVKVSQHIGVTRLDLKDIFNTTRL) the chain is on the extracellular side. The N-linked (GlcNAc...) asparagine glycan is linked to asparagine 94. A helical transmembrane segment spans residues 122 to 138 (VAPDLGVLLASSLCLGL). Over 139–201 (CGRLTRKAGQ…ASRFRVTAHW (63 aa)) the chain is Cytoplasmic. Residues 202-221 (LLMTSGRTLVIVLLALAGIA) form a helical membrane-spanning segment. At 222–223 (HP) the chain is on the extracellular side. The helical transmembrane segment at 224–243 (SAFSSIYLVVFLAICTWWSC) threads the bilayer. Residues 244 to 254 (HFPLSPLGFNT) are Cytoplasmic-facing. The helical transmembrane segment at 255 to 275 (LCVMVSCFGAGHLICLYCYQT) threads the bilayer. Residues 276–316 (PFIQDMLPPGNIWARLFGLKNFVDLPNYSSPNALVLNTKHA) lie on the Extracellular side of the membrane. Residues 317-337 (WPIYVSPGILLLLYYTATSLL) traverse the membrane as a helical segment. The Cytoplasmic portion of the chain corresponds to 338 to 424 (KLHKSCPSEL…EMSPLHGLGH (87 aa)). Positions 347-387 (LRKETPREDEEHELELDHLEPEPQARDATQGEMPMTTEPDL) are disordered. Residues 361–371 (ELDHLEPEPQA) show a composition bias toward basic and acidic residues. A helical transmembrane segment spans residues 425–445 (LIMDQSYVCALIAMMVWSIMY). Over 446–447 (HS) the chain is Extracellular. Residues 448–463 (WLTFVLLLWACLIWTV) traverse the membrane as a helical segment. The Cytoplasmic segment spans residues 464–468 (RSRHQ). Residues 469-491 (LAMLCSPCILLYGLTLCCLRYVW) form a helical membrane-spanning segment. The Extracellular portion of the chain corresponds to 492-518 (AMELPELPTTLGPVSLHQLGLEHTRYP). The helical transmembrane segment at 519 to 536 (CLDLGAMLLYLLTFWLLL) threads the bilayer. Over 537–580 (RQFVKEKLLKKQKVPAALLEVTVADTEPTQTQTLLRSLGELVTG) the chain is Cytoplasmic. Residues 581-601 (IYVKYWIYVCAGMFIVVSFAG) form a helical membrane-spanning segment. Residue arginine 602 is a topological domain, extracellular. The chain crosses the membrane as a helical span at residues 603–623 (LVVYKIVYMFLFLLCLTLFQV). Topologically, residues 624–633 (YYTLWRKLLR) are cytoplasmic. Residues 634–655 (VFWWLVVAYTMLVLIAVYTFQF) form a helical membrane-spanning segment. At 656–685 (QDFPTYWRNLTGFTDEQLGDLGLEQFSVSE) the chain is on the extracellular side. The chain crosses the membrane as a helical span at residues 686 to 702 (LFSSILIPGFFLLACIL). Topologically, residues 703-811 (QLHYFHRPFM…RRLLELHVFK (109 aa)) are cytoplasmic. Serine 758 carries the post-translational modification Phosphoserine. A helical membrane pass occupies residues 812–823 (LVALYTVWVALK). The Extracellular segment spans residues 824-826 (EVS). The chain crosses the membrane as a helical span at residues 827–840 (VMNLLLVVLWAFAL). Residues 841-854 (PYPRFRPMASCLST) are Cytoplasmic-facing. A helical membrane pass occupies residues 855–869 (VWTCIIIVCKMLYQL). The Extracellular portion of the chain corresponds to 870-921 (KIVNPHEYSSNCTEPFPNNTNLQPLEINQSLLYRGPVDPANWFGVRKGYPNL). Residues 922–949 (GYIQNHLQILLLLVFEAVVYRRQEHYRR) traverse the membrane as a helical segment. The Cytoplasmic segment spans residues 950–989 (QHQQAPLPAQAVCADGTRQRLDQDLLSCLKYFINFFFYKF). A helical membrane pass occupies residues 990–1005 (GLEICFLMAVNVIGQR). At 1006-1007 (MN) the chain is on the extracellular side. Residues 1008–1023 (FMVILHGCWLVAILTR) form a helical membrane-spanning segment. The Cytoplasmic portion of the chain corresponds to 1024 to 1036 (RRREAIARLWPNY). A helical membrane pass occupies residues 1037 to 1052 (CLFLTLFLLYQYLLCL). At 1053 to 1091 (GMPPALCIDYPWRWSKAIPMNSALIKWLYLPDFFRAPNS) the chain is on the extracellular side. Residues 1092 to 1113 (TNLISDFLLLLCASQQWQVFSA) traverse the membrane as a helical segment. The Cytoplasmic segment spans residues 1114-1148 (ERTEEWQRMAGINTDHLEPLRGEPNPIPNFIHCRS). The chain crosses the membrane as a helical span at residues 1149–1175 (YLDMLKVAVFRYLFWLVLVVVFVAGAT). The Extracellular portion of the chain corresponds to 1176-1180 (RISIF). Residues 1181–1199 (GLGYLLACFYLLLFGTTLL) traverse the membrane as a helical segment. Residues 1200 to 1212 (QKDTRAQLVLWDC) lie on the Cytoplasmic side of the membrane. A helical transmembrane segment spans residues 1213–1231 (LILYNVTVIISKNMLSLLS). At 1232–1280 (CVFVEQMQSNFCWVIQLFSLVCTVKGYYDPKEMMTRDRDCLLPVEEAGI) the chain is on the extracellular side. Residues 1281 to 1297 (IWDSICFFFLLLQRRIF) traverse the membrane as a helical segment. The Cytoplasmic segment spans residues 1298–1656 (LSHYFLHVSA…ELLLDRRLHI (359 aa)). A coiled-coil region spans residues 1334 to 1365 (HRQIEEKSLAQLKRQMKRIRAKQEKYRQSQAS). 3 disordered regions span residues 1354 to 1396 (AKQE…RRQW), 1456 to 1480 (RRER…DVEP), and 1567 to 1610 (TLSG…NTRS). A compositionally biased stretch (polar residues) spans 1361–1372 (QSQASRGQLQSK). The span at 1376–1392 (DPSQEPGPDSPGGSSPP) shows a compositional bias: low complexity. A phosphoserine mark is found at serine 1385 and serine 1390. Positions 1592–1610 (SSMTDDTSSPLSTGYNTRS) are enriched in polar residues. 3 positions are modified to phosphoserine: serine 1627, serine 1631, and serine 1646. The chain crosses the membrane as a helical span at residues 1657 to 1700 (PELEEAERFEAQQGRTLRLLRAGYQCVAAHSELLCYFIIILNHM). At 1701 to 1704 (VTAS) the chain is on the extracellular side. Residues 1705–1720 (AASLVLPVLVFLWAML) form a helical membrane-spanning segment. Topologically, residues 1721-1728 (TIPRPSKR) are cytoplasmic. The chain crosses the membrane as a helical span at residues 1729-1747 (FWMTAIVFTEVMVVTKYLF). Residues 1748–1779 (QFGFFPWNSYVVLRRYENKPYFPPRILGLEKT) lie on the Extracellular side of the membrane. Residues 1780–1801 (DSYIKYDLVQLMALFFHRSQLL) traverse the membrane as a helical segment. The Cytoplasmic portion of the chain corresponds to 1802 to 1976 (CYGLWDHEED…HTKYRAATDV (175 aa)). 2 stretches are compositionally biased toward basic and acidic residues: residues 1816 to 1837 (DHCR…KLES) and 1855 to 1880 (PRDH…DLKP). The tract at residues 1816 to 1931 (DHCRSSVKDR…RPRHTQEKSK (116 aa)) is disordered. The segment covering 1881-1894 (RHTRHISIRFRRRK) has biased composition (basic residues). Over residues 1912–1931 (GEGKETTERKRPRHTQEKSK) the composition is skewed to basic and acidic residues. Residues 1977 to 1996 (YALMFLADIVDIIIIIFGFW) traverse the membrane as a helical segment. The Extracellular portion of the chain corresponds to 1997-2016 (AFGKHSAATDIASSLSDDQV). A helical transmembrane segment spans residues 2017–2033 (PQAFLFMLLVQFGTMVI). Residues 2034-2047 (DRALYLRKTVLGKL) lie on the Cytoplasmic side of the membrane. A helical membrane pass occupies residues 2048 to 2068 (AFQVVLVVAIHIWMFFILPAV). At 2069–2076 (TERMFSQN) the chain is on the extracellular side. A helical membrane pass occupies residues 2077–2092 (AVAQLWYFVKCIYFAL). The Cytoplasmic segment spans residues 2093–2192 (SAYQIRCGYP…KKKIVKYGMG (100 aa)). Residues 2193-2213 (GLIILFLIAIIWFPLLFMSLI) traverse the membrane as a helical segment. Topologically, residues 2214-2457 (RSVVGVVNQP…IFSDKVSPPS (244 aa)) are extracellular. Residues cysteine 2437 and cysteine 2441 are joined by a disulfide bond. A helical membrane pass occupies residues 2458–2478 (LGFLAGYGIVGLYVSIVLVVG). At 2479 to 2547 (KFVRGFFSEI…TMIKWTRERE (69 aa)) the chain is on the cytoplasmic side.

The protein belongs to the PIEZO (TC 1.A.75) family. In terms of assembly, homotrimer; the homotrimer forms a propeller-shaped Piezo channel with a cation-ion conducting pore. Heterotrimeric interaction may occur between PIEZO1 and PIEZO2. Interacts with PKD2. Interacts with STOMl3. Interacts with TMC1, TMC2, PCDG15 and CIB2; the interaction may be part of the MET complex. Interacts with MDFIC (via C-terminus); the interaction prolongs Piezo channel inactivation. Interacts with MDFI (via C-terminus); the interaction prolongs Piezo channel inactivation. As to expression, expressed in bladder, colon, kidney and skin. Also expressed in bone marrow, liver, lung, spleen and erythrocytes (at protein level). Expressed in myoblasts (at protein level). Expressed in red blood cells. Expressed in cochlear inner and outer hair cells (IHCs and OHCs) and vestibular organ HCs.

Its subcellular location is the endoplasmic reticulum membrane. The protein resides in the endoplasmic reticulum-Golgi intermediate compartment membrane. It localises to the cell membrane. It is found in the cell projection. The protein localises to the lamellipodium membrane. It carries out the reaction K(+)(in) = K(+)(out). It catalyses the reaction Na(+)(in) = Na(+)(out). The enzyme catalyses Ca(2+)(in) = Ca(2+)(out). The catalysed reaction is Mg(2+)(in) = Mg(2+)(out). Its activity is regulated as follows. Regulated by auxillary subunits MDFIC and MDFI. Down-regulated by phosphatidylserines exposed on the cell surface. Divalent ions decrease the single-channel permeability of K(+). Functionally, pore-forming subunit of the mechanosensitive non-specific cation Piezo channel required for rapidly adapting mechanically activated (MA) currents and has a key role in sensing touch and tactile pain. Piezo channels are homotrimeric three-blade propeller-shaped structures that utilize a cap-motion and plug-and-latch mechanism to gate their ion-conducting pathways. Generates currents characterized by a linear current-voltage relationship that are sensitive to ruthenium red and gadolinium. Conductance to monovalent alkali ions is highest for K(+), intermediate for Na(+) and lowest for Li(+). Divalent ions except for Mn(2+) permeate the channel but more slowly than the monovalent ions and they also reduce K(+) currents. Plays a key role in epithelial cell adhesion by maintaining integrin activation through R-Ras recruitment to the ER, most probably in its activated state, and subsequent stimulation of calpain signaling. In inner ear hair cells, PIEZO1/2 subunits may constitute part of the mechanotransducer (MET) non-selective cation channel complex where they may act as pore-forming ion-conducting component in the complex. In the kidney, may contribute to the detection of intraluminal pressure changes and to urine flow sensing. Acts as a shear-stress sensor that promotes endothelial cell organization and alignment in the direction of blood flow through calpain activation. Plays a key role in blood vessel formation and vascular structure in both development and adult physiology. Acts as a sensor of phosphatidylserine (PS) flipping at the plasma membrane and governs morphogenesis of muscle cells. In myoblasts, flippase-mediated PS enrichment at the inner leaflet of plasma membrane triggers channel activation and Ca(2+) influx followed by Rho GTPases signal transduction, leading to assembly of cortical actomyosin fibers and myotube formation. In Mus musculus (Mouse), this protein is Piezo-type mechanosensitive ion channel component 1.